Consider the following 939-residue polypeptide: Isoleucine--tRNA ligase (939 aa).

The 'HIGH' region signature appears at 58-68 (PYANGNIHIGH). L-isoleucyl-5'-AMP is bound at residue Glu562. The short motif at 603-607 (KMSKS) is the 'KMSKS' region element. An ATP-binding site is contributed by Lys606. Positions 903, 906, 922, and 925 each coordinate Zn(2+).

Belongs to the class-I aminoacyl-tRNA synthetase family. IleS type 1 subfamily. As to quaternary structure, monomer. It depends on Zn(2+) as a cofactor.

The protein resides in the cytoplasm. The catalysed reaction is tRNA(Ile) + L-isoleucine + ATP = L-isoleucyl-tRNA(Ile) + AMP + diphosphate. Functionally, catalyzes the attachment of isoleucine to tRNA(Ile). As IleRS can inadvertently accommodate and process structurally similar amino acids such as valine, to avoid such errors it has two additional distinct tRNA(Ile)-dependent editing activities. One activity is designated as 'pretransfer' editing and involves the hydrolysis of activated Val-AMP. The other activity is designated 'posttransfer' editing and involves deacylation of mischarged Val-tRNA(Ile). This chain is Isoleucine--tRNA ligase, found in Buchnera aphidicola subsp. Baizongia pistaciae (strain Bp).